The chain runs to 337 residues: Holliday junction branch migration complex subunit RuvB (337 aa).

The interval 1–179 (MTHQVSVLHQ…FSFSGRVSYY (179 aa)) is large ATPase domain (RuvB-L). ATP contacts are provided by residues Leu18, Arg19, Gly60, Lys63, Thr64, Ser65, 126–128 (EDY), Arg169, Tyr179, and Arg216. Thr64 is a binding site for Mg(2+). Residues 180 to 250 (SDEDLATILK…VAEKALSMLL (71 aa)) form a small ATPAse domain (RuvB-S) region. Residues 253 to 337 (DWGLNEIDIK…DNLQILGEEK (85 aa)) form a head domain (RuvB-H) region. Lys308 and Arg313 together coordinate DNA.

This sequence belongs to the RuvB family. In terms of assembly, homohexamer. Forms an RuvA(8)-RuvB(12)-Holliday junction (HJ) complex. HJ DNA is sandwiched between 2 RuvA tetramers; dsDNA enters through RuvA and exits via RuvB. An RuvB hexamer assembles on each DNA strand where it exits the tetramer. Each RuvB hexamer is contacted by two RuvA subunits (via domain III) on 2 adjacent RuvB subunits; this complex drives branch migration. In the full resolvosome a probable DNA-RuvA(4)-RuvB(12)-RuvC(2) complex forms which resolves the HJ.

The protein resides in the cytoplasm. The catalysed reaction is ATP + H2O = ADP + phosphate + H(+). The RuvA-RuvB-RuvC complex processes Holliday junction (HJ) DNA during genetic recombination and DNA repair, while the RuvA-RuvB complex plays an important role in the rescue of blocked DNA replication forks via replication fork reversal (RFR). RuvA specifically binds to HJ cruciform DNA, conferring on it an open structure. The RuvB hexamer acts as an ATP-dependent pump, pulling dsDNA into and through the RuvAB complex. RuvB forms 2 homohexamers on either side of HJ DNA bound by 1 or 2 RuvA tetramers; 4 subunits per hexamer contact DNA at a time. Coordinated motions by a converter formed by DNA-disengaged RuvB subunits stimulates ATP hydrolysis and nucleotide exchange. Immobilization of the converter enables RuvB to convert the ATP-contained energy into a lever motion, pulling 2 nucleotides of DNA out of the RuvA tetramer per ATP hydrolyzed, thus driving DNA branch migration. The RuvB motors rotate together with the DNA substrate, which together with the progressing nucleotide cycle form the mechanistic basis for DNA recombination by continuous HJ branch migration. Branch migration allows RuvC to scan DNA until it finds its consensus sequence, where it cleaves and resolves cruciform DNA. This is Holliday junction branch migration complex subunit RuvB from Chlamydia felis (strain Fe/C-56) (Chlamydophila felis).